An 838-amino-acid polypeptide reads, in one-letter code: Probable beta-glucosidase I (838 aa).

Asparagine 197 is a glycosylation site (N-linked (GlcNAc...) asparagine). Residue aspartate 225 is part of the active site. The region spanning 395 to 555 is the PA14 domain; it reads DGKKGFKFRV…SQEELISKAA (161 aa). Asparagine 493 carries N-linked (GlcNAc...) asparagine glycosylation.

This sequence belongs to the glycosyl hydrolase 3 family.

It is found in the secreted. It carries out the reaction Hydrolysis of terminal, non-reducing beta-D-glucosyl residues with release of beta-D-glucose.. Its pathway is glycan metabolism; cellulose degradation. Its function is as follows. Beta-glucosidases are one of a number of cellulolytic enzymes involved in the degradation of cellulosic biomass. Catalyzes the last step releasing glucose from the inhibitory cellobiose. This is Probable beta-glucosidase I (bglI) from Neosartorya fischeri (strain ATCC 1020 / DSM 3700 / CBS 544.65 / FGSC A1164 / JCM 1740 / NRRL 181 / WB 181) (Aspergillus fischerianus).